Reading from the N-terminus, the 118-residue chain is Large ribosomal subunit protein uL24 (118 aa).

The segment at M1–V24 is disordered.

Belongs to the universal ribosomal protein uL24 family. In terms of assembly, part of the 50S ribosomal subunit.

Its function is as follows. One of two assembly initiator proteins, it binds directly to the 5'-end of the 23S rRNA, where it nucleates assembly of the 50S subunit. In terms of biological role, located at the polypeptide exit tunnel on the outside of the subunit. This is Large ribosomal subunit protein uL24 from Halobacterium salinarum (strain ATCC 700922 / JCM 11081 / NRC-1) (Halobacterium halobium).